Here is a 426-residue protein sequence, read N- to C-terminus: 3-phosphoshikimate 1-carboxyvinyltransferase (426 aa).

The 3-phosphoshikimate site is built by Lys22, Ser23, and Arg27. Lys22 contacts phosphoenolpyruvate. The phosphoenolpyruvate site is built by Gly96 and Arg124. 3-phosphoshikimate-binding residues include Ser170, Ser171, Gln172, Ser198, Asp314, Asn337, and Lys341. Gln172 is a phosphoenolpyruvate binding site. Asp314 (proton acceptor) is an active-site residue. The phosphoenolpyruvate site is built by Arg345, Arg387, and Lys412.

It belongs to the EPSP synthase family. In terms of assembly, monomer.

It is found in the cytoplasm. It catalyses the reaction 3-phosphoshikimate + phosphoenolpyruvate = 5-O-(1-carboxyvinyl)-3-phosphoshikimate + phosphate. It functions in the pathway metabolic intermediate biosynthesis; chorismate biosynthesis; chorismate from D-erythrose 4-phosphate and phosphoenolpyruvate: step 6/7. Catalyzes the transfer of the enolpyruvyl moiety of phosphoenolpyruvate (PEP) to the 5-hydroxyl of shikimate-3-phosphate (S3P) to produce enolpyruvyl shikimate-3-phosphate and inorganic phosphate. The protein is 3-phosphoshikimate 1-carboxyvinyltransferase of Shewanella sediminis (strain HAW-EB3).